The chain runs to 657 residues: Folic acid synthesis protein FOL1 (657 aa).

The interval 1 to 116 is DHNA; it reads MDKIIIKDLL…WPGVQIERTL (116 aa). Residues 149–274 are HPPK; it reads YLAFGSNLGD…FVLLPLSDIA (126 aa). In terms of domain architecture, Pterin-binding spans 333-641; it reads TFIMGILNVT…DIPEIRDAML (309 aa). Residues 335 to 657 form a DHPS region; that stretch reads IMGILNVTPD…KPQRRYQIQK (323 aa). N340 is a Mg(2+) binding site. Positions 380, 416, and 435 each coordinate (7,8-dihydropterin-6-yl)methyl diphosphate. Positions 466–524 are disordered; that stretch reads LNNSNDSNSNSSINTNGEDNNNNNNNNNNNNNNNNNNNNNNNNNDDNDNDNRSKIKQKI. Residues 467–509 show a composition bias toward low complexity; it reads NNSNDSNSNSSINTNGEDNNNNNNNNNNNNNNNNNNNNNNNNN. Over residues 514–524 the composition is skewed to basic and acidic residues; the sequence is NDNRSKIKQKI. Residues D547, K583, and 629 to 631 contribute to the (7,8-dihydropterin-6-yl)methyl diphosphate site; that span reads RIH.

This sequence in the N-terminal section; belongs to the DHNA family. The protein in the central section; belongs to the HPPK family. In the C-terminal section; belongs to the DHPS family. Mg(2+) serves as cofactor.

It catalyses the reaction 7,8-dihydroneopterin = 6-hydroxymethyl-7,8-dihydropterin + glycolaldehyde. The catalysed reaction is 6-hydroxymethyl-7,8-dihydropterin + ATP = (7,8-dihydropterin-6-yl)methyl diphosphate + AMP + H(+). The enzyme catalyses (7,8-dihydropterin-6-yl)methyl diphosphate + 4-aminobenzoate = 7,8-dihydropteroate + diphosphate. It functions in the pathway cofactor biosynthesis; tetrahydrofolate biosynthesis; 2-amino-4-hydroxy-6-hydroxymethyl-7,8-dihydropteridine diphosphate from 7,8-dihydroneopterin triphosphate: step 3/4. The protein operates within cofactor biosynthesis; tetrahydrofolate biosynthesis; 2-amino-4-hydroxy-6-hydroxymethyl-7,8-dihydropteridine diphosphate from 7,8-dihydroneopterin triphosphate: step 4/4. It participates in cofactor biosynthesis; tetrahydrofolate biosynthesis; 7,8-dihydrofolate from 2-amino-4-hydroxy-6-hydroxymethyl-7,8-dihydropteridine diphosphate and 4-aminobenzoate: step 1/2. In terms of biological role, catalyzes three sequential steps of tetrahydrofolate biosynthesis. In Dictyostelium discoideum (Social amoeba), this protein is Folic acid synthesis protein FOL1 (fol1).